The following is a 356-amino-acid chain: S-adenosylmethionine:tRNA ribosyltransferase-isomerase (356 aa).

The protein belongs to the QueA family. As to quaternary structure, monomer.

Its subcellular location is the cytoplasm. The enzyme catalyses 7-aminomethyl-7-carbaguanosine(34) in tRNA + S-adenosyl-L-methionine = epoxyqueuosine(34) in tRNA + adenine + L-methionine + 2 H(+). It participates in tRNA modification; tRNA-queuosine biosynthesis. Transfers and isomerizes the ribose moiety from AdoMet to the 7-aminomethyl group of 7-deazaguanine (preQ1-tRNA) to give epoxyqueuosine (oQ-tRNA). The polypeptide is S-adenosylmethionine:tRNA ribosyltransferase-isomerase (Ralstonia nicotianae (strain ATCC BAA-1114 / GMI1000) (Ralstonia solanacearum)).